A 287-amino-acid polypeptide reads, in one-letter code: Elongation factor Ts (287 aa).

Positions 80 to 83 are involved in Mg(2+) ion dislocation from EF-Tu; that stretch reads TDFL.

This sequence belongs to the EF-Ts family.

The protein localises to the cytoplasm. In terms of biological role, associates with the EF-Tu.GDP complex and induces the exchange of GDP to GTP. It remains bound to the aminoacyl-tRNA.EF-Tu.GTP complex up to the GTP hydrolysis stage on the ribosome. The protein is Elongation factor Ts of Pseudomonas putida (strain ATCC 700007 / DSM 6899 / JCM 31910 / BCRC 17059 / LMG 24140 / F1).